The chain runs to 318 residues: Homoserine kinase (318 aa).

97-107 (PIGSGLGSSAC) contributes to the ATP binding site.

This sequence belongs to the GHMP kinase family. Homoserine kinase subfamily.

Its subcellular location is the cytoplasm. It catalyses the reaction L-homoserine + ATP = O-phospho-L-homoserine + ADP + H(+). It participates in amino-acid biosynthesis; L-threonine biosynthesis; L-threonine from L-aspartate: step 4/5. Its function is as follows. Catalyzes the ATP-dependent phosphorylation of L-homoserine to L-homoserine phosphate. In Vibrio parahaemolyticus serotype O3:K6 (strain RIMD 2210633), this protein is Homoserine kinase.